The sequence spans 214 residues: Adenylate kinase (214 aa).

Residue 10–15 (GAGKGT) coordinates ATP. The NMP stretch occupies residues 30-59 (STGDMFRAAVKNETPLGLEAKSYMDKGHLV). Residues Thr31, Arg36, 57 to 59 (HLV), 85 to 88 (GFPR), and Gln92 contribute to the AMP site. Residues 126–163 (GRWICPVCGASYHTMFNPPKEAGVCDKDGGKLYQREDD) form an LID region. Position 127 (Arg127) interacts with ATP. Cys130 and Cys133 together coordinate Zn(2+). 136–137 (SY) contacts ATP. Cys150 and Asp153 together coordinate Zn(2+). Positions 160 and 171 each coordinate AMP. Gln199 provides a ligand contact to ATP.

It belongs to the adenylate kinase family. In terms of assembly, monomer.

The protein resides in the cytoplasm. The enzyme catalyses AMP + ATP = 2 ADP. It functions in the pathway purine metabolism; AMP biosynthesis via salvage pathway; AMP from ADP: step 1/1. In terms of biological role, catalyzes the reversible transfer of the terminal phosphate group between ATP and AMP. Plays an important role in cellular energy homeostasis and in adenine nucleotide metabolism. This chain is Adenylate kinase, found in Brevibacillus brevis (strain 47 / JCM 6285 / NBRC 100599).